We begin with the raw amino-acid sequence, 45 residues long: Large ribosomal subunit protein bL36 (45 aa).

Belongs to the bacterial ribosomal protein bL36 family.

The protein is Large ribosomal subunit protein bL36 of Aliivibrio salmonicida (strain LFI1238) (Vibrio salmonicida (strain LFI1238)).